A 326-amino-acid polypeptide reads, in one-letter code: L-lactate dehydrogenase (326 aa).

Residues Val-26, Asp-47, Lys-52, Tyr-78, and 92-93 (GA) each bind NAD(+). Substrate-binding residues include Gln-95 and Arg-101. NAD(+) is bound by residues Thr-114, 131 to 133 (ASN), and Ser-156. Residue 133-136 (NPVD) coordinates substrate. Substrate is bound at residue 161 to 164 (DTAR). The beta-D-fructose 1,6-bisphosphate site is built by Arg-166 and His-181. His-188 acts as the Proton acceptor in catalysis. Phosphotyrosine is present on Tyr-233. Residue Thr-242 coordinates substrate.

It belongs to the LDH/MDH superfamily. LDH family. Homotetramer.

It localises to the cytoplasm. It catalyses the reaction (S)-lactate + NAD(+) = pyruvate + NADH + H(+). It participates in fermentation; pyruvate fermentation to lactate; (S)-lactate from pyruvate: step 1/1. Allosterically activated by fructose 1,6-bisphosphate (FBP). In terms of biological role, catalyzes the conversion of lactate to pyruvate. The polypeptide is L-lactate dehydrogenase (Corynebacterium jeikeium (strain K411)).